A 118-amino-acid chain; its full sequence is Non-specific lipid-transfer protein D (118 aa).

A signal peptide spans 1–25 (MAGLMKLACLIFACMIVAGPITSNA). Intrachain disulfides connect cysteine 29–cysteine 77, cysteine 39–cysteine 54, cysteine 55–cysteine 100, and cysteine 75–cysteine 114.

Belongs to the plant LTP family.

Its function is as follows. Plant non-specific lipid-transfer proteins transfer phospholipids as well as galactolipids across membranes. May play a role in wax or cutin deposition in the cell walls of expanding epidermal cells and certain secretory tissues. The protein is Non-specific lipid-transfer protein D (WAX9D) of Brassica oleracea var. italica (Broccoli).